The following is a 389-amino-acid chain: SH2 domain-containing protein 2A (389 aa).

A disordered region spans residues 41–63 (AASPQAPEAASNTGNAERAEEVP). Residues 95 to 186 (WFHGFITRRE…PYGETLTEPL (92 aa)) form the SH2 domain. Residues 190–295 (TPEPAGLSLR…PIAFYAMGRG (106 aa)) form a disordered region. A compositionally biased stretch (polar residues) spans 203-216 (SNFGSKSQDPNPQY). Residue S217 is modified to Phosphoserine. 2 short sequence motifs (SH3-binding) span residues 244-250 (RPKPPIP) and 272-278 (RPKPSNP). The span at 245–256 (PKPPIPAKPQLP) shows a compositional bias: pro residues. Residue S296 is modified to Phosphoserine. The interval 324-389 (KSWSRPVPGG…QAWLPLGPPQ (66 aa)) is disordered. Residues 337-348 (GGSQLHSENSVI) are compositionally biased toward polar residues. The segment covering 352 to 361 (PPLPHQPPPA) has biased composition (pro residues).

Interacts with KDR. Interacts with TXK and ITK. Phosphorylated on tyrosine residues. Expression limited to tissues of the immune system and, in particular, activated T-cells. Expressed in peripheral blood leukocytes, thymus and spleen. Much lower expression or undetectable, in brain, placenta, skeletal muscle, prostate, testis, ovary, small intestine, and colon. Expressed at low levels in unstimulated T-cells, but not expressed in normal resting or activated B-cells. According to PubMed:10692392, expression is not restricted to activated T-cells, but strongly expressed in blood cell lineages, the endothelium and other cell and tissue types, such as heart, lung, and liver.

The protein localises to the cytoplasm. Functionally, could be a T-cell-specific adapter protein involved in the control of T-cell activation. May play a role in the CD4-p56-LCK-dependent signal transduction pathway. Could also play an important role in normal and pathological angiogenesis. Could be an adapter protein that facilitates and regulates interaction of KDR with effector proteins important to endothelial cell survival and proliferation. The sequence is that of SH2 domain-containing protein 2A (SH2D2A) from Homo sapiens (Human).